The chain runs to 399 residues: Tryptophan synthase beta chain (399 aa).

At Lys-92 the chain carries N6-(pyridoxal phosphate)lysine.

Belongs to the TrpB family. Tetramer of two alpha and two beta chains. Pyridoxal 5'-phosphate is required as a cofactor.

It carries out the reaction (1S,2R)-1-C-(indol-3-yl)glycerol 3-phosphate + L-serine = D-glyceraldehyde 3-phosphate + L-tryptophan + H2O. It functions in the pathway amino-acid biosynthesis; L-tryptophan biosynthesis; L-tryptophan from chorismate: step 5/5. In terms of biological role, the beta subunit is responsible for the synthesis of L-tryptophan from indole and L-serine. The protein is Tryptophan synthase beta chain of Legionella pneumophila (strain Paris).